The chain runs to 236 residues: MPNRRRCKLSTAISTVATLAIASPCAYFLVYEPTASAKPAAKHYEFKQAASIADLPGEVLDAISQGLSQFGINLPPVPSLTGTDDPGNGLRTPGLTSPDLTNQELGTPVLTAPGTGLTPPVTGSPICTAPDLNLGGTCPSEVPITTPISLDPGTDGTYPILGDPSTLGGTSPISTSSGELVNDLLKVANQLGASQVMDLIKGVVMPAVMQGVQNGNVAGDLSGSVTPAAISLIPVT.

The first 22 residues, 1 to 22 (MPNRRRCKLSTAISTVATLAIA), serve as a signal peptide directing secretion. The tract at residues 76 to 105 (PVPSLTGTDDPGNGLRTPGLTSPDLTNQEL) is disordered. Over residues 94-105 (GLTSPDLTNQEL) the composition is skewed to polar residues.

This sequence to M.tuberculosis ERP.

The chain is 28 kDa antigen from Mycobacterium leprae (strain TN).